The sequence spans 597 residues: Elongation factor 4 (597 aa).

One can recognise a tr-type G domain in the interval 2-184 (KHIRNFSIIA…TIVKSIPAPE (183 aa)). GTP-binding positions include 14-19 (DHGKST) and 131-134 (NKID).

The protein belongs to the TRAFAC class translation factor GTPase superfamily. Classic translation factor GTPase family. LepA subfamily.

The protein localises to the cell inner membrane. The catalysed reaction is GTP + H2O = GDP + phosphate + H(+). Required for accurate and efficient protein synthesis under certain stress conditions. May act as a fidelity factor of the translation reaction, by catalyzing a one-codon backward translocation of tRNAs on improperly translocated ribosomes. Back-translocation proceeds from a post-translocation (POST) complex to a pre-translocation (PRE) complex, thus giving elongation factor G a second chance to translocate the tRNAs correctly. Binds to ribosomes in a GTP-dependent manner. This chain is Elongation factor 4, found in Aliivibrio fischeri (strain MJ11) (Vibrio fischeri).